The following is a 728-amino-acid chain: 1,4-alpha-glucan branching enzyme GlgB (728 aa).

D405 acts as the Nucleophile in catalysis. The active-site Proton donor is E458.

Belongs to the glycosyl hydrolase 13 family. GlgB subfamily. In terms of assembly, monomer.

The catalysed reaction is Transfers a segment of a (1-&gt;4)-alpha-D-glucan chain to a primary hydroxy group in a similar glucan chain.. The protein operates within glycan biosynthesis; glycogen biosynthesis. Functionally, catalyzes the formation of the alpha-1,6-glucosidic linkages in glycogen by scission of a 1,4-alpha-linked oligosaccharide from growing alpha-1,4-glucan chains and the subsequent attachment of the oligosaccharide to the alpha-1,6 position. This Shigella flexneri protein is 1,4-alpha-glucan branching enzyme GlgB.